The chain runs to 194 residues: Myelin-associated neurite-outgrowth inhibitor (194 aa).

N-acetylmethionine is present on methionine 1. The Cytoplasmic portion of the chain corresponds to methionine 1–lysine 18. Phosphoserine is present on serine 6. The helical transmembrane segment at glycine 19–tyrosine 41 threads the bilayer. Over proline 42–serine 141 the chain is Extracellular. Residue asparagine 45 is glycosylated (N-linked (GlcNAc...) asparagine). Residues glycine 142 to alanine 163 form a helical membrane-spanning segment. Over histidine 164 to tryptophan 194 the chain is Cytoplasmic.

It belongs to the FAM168 family. May form homodimers. May interact with DAZAP2, FAM168A, PRDX6, RBM6, TMTC1 and YPEL2. Interacts with CDC27. In terms of processing, N-glycosylated. As to expression, predominantly expressed in the brain, including olfactory bulb, cortex and cerebellum (at protein level).

The protein localises to the cytoplasm. The protein resides in the perinuclear region. Its subcellular location is the cell membrane. It localises to the cell projection. It is found in the axon. Its function is as follows. Inhibitor of neuronal axonal outgrowth. Acts as a negative regulator of CDC42 and STAT3 and a positive regulator of STMN2. Positive regulator of CDC27. In Mus musculus (Mouse), this protein is Myelin-associated neurite-outgrowth inhibitor (Fam168b).